An 880-amino-acid chain; its full sequence is Leucine-rich repeat-containing protein 66 (880 aa).

The helical transmembrane segment at Leu4–Ala24 threads the bilayer. Residue Asn45 is glycosylated (N-linked (GlcNAc...) asparagine). LRR repeat units follow at residues Lys86–Tyr107, Ala110–Ser130, Leu149–Lys171, Ser172–Asn193, Gln196–Asp217, and Lys220–Ala241. A glycan (N-linked (GlcNAc...) asparagine) is linked at Asn115. A disordered region spans residues Ser319–Lys368. Positions Lys337–Arg354 are enriched in basic residues. A helical transmembrane segment spans residues Ala376 to Phe396. Disordered regions lie at residues Pro463 to Ala504 and Val679 to Asn746. A compositionally biased stretch (polar residues) spans Gly483–Asp493. Residues Cys697–Glu707 are compositionally biased toward acidic residues. A compositionally biased stretch (low complexity) spans Ser709 to Ser720. At Ser723 the chain carries Phosphoserine. Positions Asp737–Asn746 are enriched in polar residues. N-linked (GlcNAc...) asparagine glycosylation is present at Asn746. Ser752 is modified (phosphoserine). N-linked (GlcNAc...) asparagine glycosylation occurs at Asn756. Disordered stretches follow at residues Gly764 to Asp816 and Thr855 to Lys880. Composition is skewed to basic and acidic residues over residues Thr788 to Glu800 and Asp865 to Lys880.

The protein resides in the membrane. This chain is Leucine-rich repeat-containing protein 66 (LRRC66), found in Homo sapiens (Human).